Consider the following 266-residue polypeptide: Proteasome subunit alpha type-1 (266 aa).

It belongs to the peptidase T1A family. The 26S proteasome consists of a 20S proteasome core and two 19S regulatory subunits. The 20S proteasome core is composed of 28 subunits that are arranged in four stacked rings, resulting in a barrel-shaped structure. The two end rings are each formed by seven alpha subunits, and the two central rings are each formed by seven beta subunits. The catalytic chamber with the active sites is on the inside of the barrel.

The protein resides in the cytoplasm. Its subcellular location is the nucleus. Its function is as follows. The proteasome is a multicatalytic proteinase complex which is characterized by its ability to cleave peptides with Arg, Phe, Tyr, Leu, and Glu adjacent to the leaving group at neutral or slightly basic pH. The proteasome has an ATP-dependent proteolytic activity. In Trypanosoma brucei brucei, this protein is Proteasome subunit alpha type-1.